We begin with the raw amino-acid sequence, 711 residues long: MRRWLSLVLSMSFVFSAIFIVSDTQKVTVEAAGNLNKVNFTSDVVYQIVVDRFVDGNTSNNPSGALFSSGCTNLRKYCGGDWQGIINKINDGYLTDMGVTAIWISQPVENVFSVMNDASGSASYHGYWARDFKKPNPFFGTLSDFQRLVDAAHAKGIKVIIDFAPNHTSPASETNPSYMENGRLYDNGTLLGGYTNDANMYFHHNGGTTFSSLEDGIYRNLFDLADLNHQNPVIDRYLKDAVKMWIDMGIDGIRMDAVKHMPFGWQKSLMDEIDNYRPVFTFGEWFLSENEVDANNHYFANESGMSLLDFRFGQKLRQVLRNNSDNWYGFNQMIQDTASAYDEVLDQVTFIDNHDMDRFMIDGGDPRKVDMALAVLLTSRGVPNIYYGTEQYMTGNGDPNNRKMMSSFNKNTRAYQVIQKLSSLRRNNPALAYGDTEQRWINGDVYVYERQFGKDVVLVAVNRSSSSNYSITGLFTALPAGTYTDQLGGLLDGNTIQVGSNGSVNAFDLGPGEVGVWAYSATESTPIIGHVGPMMGQVGHQVTIDGEGFGTNTGTVKFGTTAANVVSWSNNQIVVAVPNVSPGKYNITVQSSSGQTSAAYDNFEVLTNDQVSVRFVVNNATTNLGQNIYIVGNVYELGNWDTSKAIGPMFNQVVYSYPTWYIDVSVPEGKTIEFKFIKKDSQGNVTWESGSNHVYTTPTNTTGKIIVDWQN.

The signal sequence occupies residues 1-31; the sequence is MRRWLSLVLSMSFVFSAIFIVSDTQKVTVEA. The segment at 32 to 165 is A1; it reads AGNLNKVNFT…GIKVIIDFAP (134 aa). Ca(2+)-binding residues include aspartate 55, asparagine 57, asparagine 60, and asparagine 61. A disulfide bridge links cysteine 71 with cysteine 78. The Ca(2+) site is built by glycine 79 and aspartate 81. Position 127–128 (127–128) interacts with substrate; sequence YW. A Ca(2+)-binding site is contributed by asparagine 166. Residues 166–229 form a b region; that stretch reads NHTSPASETN…NLFDLADLNH (64 aa). Histidine 167 contributes to the substrate binding site. Ca(2+) is bound at residue isoleucine 217. 220-223 serves as a coordination point for substrate; the sequence is NLFD. Aspartate 226 serves as a coordination point for Ca(2+). The segment at 230-433 is A2; sequence QNPVIDRYLK…LRRNNPALAY (204 aa). Position 254 (arginine 254) interacts with substrate. Aspartate 256 functions as the Nucleophile in the catalytic mechanism. Residue 259 to 260 participates in substrate binding; sequence KH. Histidine 260 serves as a coordination point for Ca(2+). Glutamate 284 (proton donor) is an active-site residue. Substrate contacts are provided by histidine 354, aspartate 398, and arginine 402. Residues 434–522 are c; that stretch reads GDTEQRWING…EVGVWAYSAT (89 aa). Positions 523–606 are d; that stretch reads ESTPIIGHVG…SAAYDNFEVL (84 aa). Residues 526–604 enclose the IPT/TIG domain; that stretch reads PIIGHVGPMM…QTSAAYDNFE (79 aa). One can recognise a CBM20 domain in the interval 605–711; sequence VLTNDQVSVR…TGKIIVDWQN (107 aa). Residues 607–711 form an e region; sequence TNDQVSVRFV…TGKIIVDWQN (105 aa).

It belongs to the glycosyl hydrolase 13 family. Monomer. Ca(2+) is required as a cofactor.

Its subcellular location is the secreted. The catalysed reaction is Cyclizes part of a (1-&gt;4)-alpha-D-glucan chain by formation of a (1-&gt;4)-alpha-D-glucosidic bond.. This Geobacillus stearothermophilus (Bacillus stearothermophilus) protein is Cyclomaltodextrin glucanotransferase (cgt).